The chain runs to 384 residues: 8-amino-7-oxononanoate synthase (384 aa).

Arginine 21 contacts substrate. Pyridoxal 5'-phosphate is bound at residue 108 to 109 (GF). Substrate is bound at residue histidine 133. 3 residues coordinate pyridoxal 5'-phosphate: serine 179, histidine 207, and threonine 233. N6-(pyridoxal phosphate)lysine is present on lysine 236. Threonine 352 provides a ligand contact to substrate.

Belongs to the class-II pyridoxal-phosphate-dependent aminotransferase family. BioF subfamily. Homodimer. Pyridoxal 5'-phosphate serves as cofactor.

The enzyme catalyses 6-carboxyhexanoyl-[ACP] + L-alanine + H(+) = (8S)-8-amino-7-oxononanoate + holo-[ACP] + CO2. Its pathway is cofactor biosynthesis; biotin biosynthesis. Its function is as follows. Catalyzes the decarboxylative condensation of pimeloyl-[acyl-carrier protein] and L-alanine to produce 8-amino-7-oxononanoate (AON), [acyl-carrier protein], and carbon dioxide. The sequence is that of 8-amino-7-oxononanoate synthase from Escherichia coli (strain SE11).